Reading from the N-terminus, the 260-residue chain is NADH-ubiquinone oxidoreductase chain 6 (260 aa).

6 helical membrane passes run 2-22 (LTNYLLIIFCFLALFCSFMII), 30-50 (SILYLILVFCNVTFVLIILGV), 52-72 (FIAIIFLIVYVGAIAVLFLFV), 101-121 (FLFQLFTFVFNFSVVEVFGLF), 142-162 (VPSGLLINGIYIFPNLSNLGI), and 211-231 (FFIFLVVSLILLISMIGSIIL).

Belongs to the complex I subunit 6 family.

It is found in the mitochondrion membrane. The enzyme catalyses a ubiquinone + NADH + 5 H(+)(in) = a ubiquinol + NAD(+) + 4 H(+)(out). Its function is as follows. Core subunit of the mitochondrial membrane respiratory chain NADH dehydrogenase (Complex I) that is believed to belong to the minimal assembly required for catalysis. Complex I functions in the transfer of electrons from NADH to the respiratory chain. The immediate electron acceptor for the enzyme is believed to be ubiquinone. This Acanthamoeba castellanii (Amoeba) protein is NADH-ubiquinone oxidoreductase chain 6 (ND6).